The sequence spans 345 residues: UDP-3-O-acylglucosamine N-acyltransferase (345 aa).

His253 acts as the Proton acceptor in catalysis.

It belongs to the transferase hexapeptide repeat family. LpxD subfamily. Homotrimer.

The catalysed reaction is a UDP-3-O-[(3R)-3-hydroxyacyl]-alpha-D-glucosamine + a (3R)-hydroxyacyl-[ACP] = a UDP-2-N,3-O-bis[(3R)-3-hydroxyacyl]-alpha-D-glucosamine + holo-[ACP] + H(+). The protein operates within bacterial outer membrane biogenesis; LPS lipid A biosynthesis. Catalyzes the N-acylation of UDP-3-O-acylglucosamine using 3-hydroxyacyl-ACP as the acyl donor. Is involved in the biosynthesis of lipid A, a phosphorylated glycolipid that anchors the lipopolysaccharide to the outer membrane of the cell. The protein is UDP-3-O-acylglucosamine N-acyltransferase of Rickettsia massiliae (strain Mtu5).